The primary structure comprises 133 residues: MRSRNKDHRSLLRYLETAPASDFSKEAVEDVVQQPCGDGVKYLLGSARLLVDVCLISRRLDAFGLDGTVIRSFLCALGRGKFLREFWCRHFFLPRCKRPCALFTIYLIPGFLHLIHSVMNYKPLLTSIFPNHK.

This is an uncharacterized protein from Saccharomyces cerevisiae (strain ATCC 204508 / S288c) (Baker's yeast).